The chain runs to 158 residues: Small ribosomal subunit protein bS16 (158 aa).

Residues 111–121 (AAAGLAEAPTK) show a composition bias toward low complexity. The disordered stretch occupies residues 111-158 (AAAGLAEAPTKPAKKAPKAEAAPKTEAAPKADAPKTEEQAGAGSGEQG). The span at 127–148 (PKAEAAPKTEAAPKADAPKTEE) shows a compositional bias: basic and acidic residues.

Belongs to the bacterial ribosomal protein bS16 family.

This chain is Small ribosomal subunit protein bS16, found in Salinispora arenicola (strain CNS-205).